Here is a 272-residue protein sequence, read N- to C-terminus: Shikimate dehydrogenase (NADP(+)) (272 aa).

Shikimate-binding positions include 14–16 (SKS) and T61. K65 serves as the catalytic Proton acceptor. E77 contacts NADP(+). Shikimate-binding residues include N86 and D102. NADP(+)-binding positions include 126 to 130 (GAGGA), 149 to 154 (NRTFSR), and M213. Y215 lines the shikimate pocket. Residue G237 coordinates NADP(+).

The protein belongs to the shikimate dehydrogenase family. Homodimer.

The enzyme catalyses shikimate + NADP(+) = 3-dehydroshikimate + NADPH + H(+). It functions in the pathway metabolic intermediate biosynthesis; chorismate biosynthesis; chorismate from D-erythrose 4-phosphate and phosphoenolpyruvate: step 4/7. In terms of biological role, involved in the biosynthesis of the chorismate, which leads to the biosynthesis of aromatic amino acids. Catalyzes the reversible NADPH linked reduction of 3-dehydroshikimate (DHSA) to yield shikimate (SA). This chain is Shikimate dehydrogenase (NADP(+)), found in Photorhabdus laumondii subsp. laumondii (strain DSM 15139 / CIP 105565 / TT01) (Photorhabdus luminescens subsp. laumondii).